Here is a 340-residue protein sequence, read N- to C-terminus: L-threonine 3-dehydrogenase (340 aa).

Cys-38 serves as a coordination point for Zn(2+). Active-site charge relay system residues include Thr-40 and His-43. Zn(2+)-binding residues include His-63, Glu-64, Cys-93, Cys-96, Cys-99, and Cys-107. Residues Ile-175, Asp-195, Arg-200, 261 to 263, and 285 to 286 contribute to the NAD(+) site; these read LGI and IY.

It belongs to the zinc-containing alcohol dehydrogenase family. As to quaternary structure, homotetramer. Zn(2+) is required as a cofactor.

It is found in the cytoplasm. It catalyses the reaction L-threonine + NAD(+) = (2S)-2-amino-3-oxobutanoate + NADH + H(+). The protein operates within amino-acid degradation; L-threonine degradation via oxydo-reductase pathway; glycine from L-threonine: step 1/2. In terms of biological role, catalyzes the NAD(+)-dependent oxidation of L-threonine to 2-amino-3-ketobutyrate. This Xanthomonas oryzae pv. oryzae (strain MAFF 311018) protein is L-threonine 3-dehydrogenase.